Reading from the N-terminus, the 843-residue chain is Leucine--tRNA ligase (843 aa).

The short motif at Pro-61–His-71 is the 'HIGH' region element. The 'KMSKS' region motif lies at Ala-606–Ser-610. Lys-609 provides a ligand contact to ATP.

Belongs to the class-I aminoacyl-tRNA synthetase family.

The protein localises to the cytoplasm. It carries out the reaction tRNA(Leu) + L-leucine + ATP = L-leucyl-tRNA(Leu) + AMP + diphosphate. In Arthrobacter sp. (strain FB24), this protein is Leucine--tRNA ligase.